Reading from the N-terminus, the 53-residue chain is UPF0391 membrane protein azo1750 (53 aa).

Transmembrane regions (helical) follow at residues 6 to 26 and 30 to 50; these read VIFL…IAAG and IAKI…VLGM.

It belongs to the UPF0391 family.

The protein resides in the cell membrane. The sequence is that of UPF0391 membrane protein azo1750 from Azoarcus sp. (strain BH72).